The chain runs to 272 residues: Ribosomal RNA small subunit methyltransferase A (272 aa).

S-adenosyl-L-methionine-binding residues include His10, Leu12, Gly37, Glu57, Asp82, and Asn98.

This sequence belongs to the class I-like SAM-binding methyltransferase superfamily. rRNA adenine N(6)-methyltransferase family. RsmA subfamily.

The protein resides in the cytoplasm. The catalysed reaction is adenosine(1518)/adenosine(1519) in 16S rRNA + 4 S-adenosyl-L-methionine = N(6)-dimethyladenosine(1518)/N(6)-dimethyladenosine(1519) in 16S rRNA + 4 S-adenosyl-L-homocysteine + 4 H(+). In terms of biological role, specifically dimethylates two adjacent adenosines (A1518 and A1519) in the loop of a conserved hairpin near the 3'-end of 16S rRNA in the 30S particle. May play a critical role in biogenesis of 30S subunits. In Gloeobacter violaceus (strain ATCC 29082 / PCC 7421), this protein is Ribosomal RNA small subunit methyltransferase A.